The primary structure comprises 333 residues: Casein kinase II subunit alpha-3 (333 aa).

Residues 34 to 319 (YEVVRKVGRG…AREAMDHPYF (286 aa)) form the Protein kinase domain. Residues 40–48 (VGRGKYSEV) and Lys63 each bind ATP. The active-site Proton acceptor is Asp151.

It belongs to the protein kinase superfamily. Ser/Thr protein kinase family. CK2 subfamily. Heterotetramer of two catalytic alpha subunits and two regulatory beta subunits.

It is found in the nucleus. The protein localises to the nucleolus. It localises to the cytoplasm. The enzyme catalyses L-seryl-[protein] + ATP = O-phospho-L-seryl-[protein] + ADP + H(+). It catalyses the reaction L-threonyl-[protein] + ATP = O-phospho-L-threonyl-[protein] + ADP + H(+). In terms of biological role, casein kinases are operationally defined by their preferential utilization of acidic proteins such as caseins as substrates. The alpha chain contains the catalytic site. The tetrameric holoenzyme CK2 is composed of two alpha and two beta subunits. Acts as a circadian clock component that maintains the correct period length through phosphorylation of CCA1. This chain is Casein kinase II subunit alpha-3, found in Arabidopsis thaliana (Mouse-ear cress).